A 172-amino-acid chain; its full sequence is Ribosome maturation factor RimM (172 aa).

The 74-residue stretch at 95 to 168 (AEGEFYYHQI…RVDVEIMEGL (74 aa)) folds into the PRC barrel domain.

The protein belongs to the RimM family. Binds ribosomal protein uS19.

The protein resides in the cytoplasm. An accessory protein needed during the final step in the assembly of 30S ribosomal subunit, possibly for assembly of the head region. Essential for efficient processing of 16S rRNA. May be needed both before and after RbfA during the maturation of 16S rRNA. It has affinity for free ribosomal 30S subunits but not for 70S ribosomes. The chain is Ribosome maturation factor RimM from Streptococcus equi subsp. equi (strain 4047).